A 657-amino-acid polypeptide reads, in one-letter code: Threonine--tRNA ligase (657 aa).

A TGS domain is found at 1-62 (MALDITFPDG…AHSGQLQIMT (62 aa)). The tract at residues 240 to 538 (DHRVIGRDLD…LTEIYKGAFP (299 aa)) is catalytic. 3 residues coordinate Zn(2+): Cys334, His385, and His515.

This sequence belongs to the class-II aminoacyl-tRNA synthetase family. Homodimer. It depends on Zn(2+) as a cofactor.

Its subcellular location is the cytoplasm. The catalysed reaction is tRNA(Thr) + L-threonine + ATP = L-threonyl-tRNA(Thr) + AMP + diphosphate + H(+). In terms of biological role, catalyzes the attachment of threonine to tRNA(Thr) in a two-step reaction: L-threonine is first activated by ATP to form Thr-AMP and then transferred to the acceptor end of tRNA(Thr). Also edits incorrectly charged L-seryl-tRNA(Thr). The chain is Threonine--tRNA ligase from Lacticaseibacillus paracasei (strain ATCC 334 / BCRC 17002 / CCUG 31169 / CIP 107868 / KCTC 3260 / NRRL B-441) (Lactobacillus paracasei).